The following is a 247-amino-acid chain: NAD(P)H-quinone oxidoreductase subunit K (247 aa).

Positions 63, 64, 128, and 159 each coordinate [4Fe-4S] cluster. The segment at 218–247 (TRQAPPKELTEAIGMEVPPALASQKQKEEA) is disordered.

The protein belongs to the complex I 20 kDa subunit family. As to quaternary structure, NDH-1 can be composed of about 15 different subunits; different subcomplexes with different compositions have been identified which probably have different functions. It depends on [4Fe-4S] cluster as a cofactor.

It is found in the cellular thylakoid membrane. It catalyses the reaction a plastoquinone + NADH + (n+1) H(+)(in) = a plastoquinol + NAD(+) + n H(+)(out). The enzyme catalyses a plastoquinone + NADPH + (n+1) H(+)(in) = a plastoquinol + NADP(+) + n H(+)(out). Its function is as follows. NDH-1 shuttles electrons from an unknown electron donor, via FMN and iron-sulfur (Fe-S) centers, to quinones in the respiratory and/or the photosynthetic chain. The immediate electron acceptor for the enzyme in this species is believed to be plastoquinone. Couples the redox reaction to proton translocation, and thus conserves the redox energy in a proton gradient. Cyanobacterial NDH-1 also plays a role in inorganic carbon-concentration. This chain is NAD(P)H-quinone oxidoreductase subunit K, found in Crocosphaera subtropica (strain ATCC 51142 / BH68) (Cyanothece sp. (strain ATCC 51142)).